The primary structure comprises 275 residues: Dermonecrotic toxin SpeSicTox-betaIIA1 (275 aa).

H5 is an active-site residue. E25 and D27 together coordinate Mg(2+). The active-site Nucleophile is H41. Intrachain disulfides connect C45/C51 and C47/C190. D85 lines the Mg(2+) pocket.

Belongs to the arthropod phospholipase D family. Class II subfamily. It depends on Mg(2+) as a cofactor. In terms of tissue distribution, expressed by the venom gland.

The protein resides in the secreted. It carries out the reaction an N-(acyl)-sphingosylphosphocholine = an N-(acyl)-sphingosyl-1,3-cyclic phosphate + choline. The enzyme catalyses an N-(acyl)-sphingosylphosphoethanolamine = an N-(acyl)-sphingosyl-1,3-cyclic phosphate + ethanolamine. It catalyses the reaction a 1-acyl-sn-glycero-3-phosphocholine = a 1-acyl-sn-glycero-2,3-cyclic phosphate + choline. The catalysed reaction is a 1-acyl-sn-glycero-3-phosphoethanolamine = a 1-acyl-sn-glycero-2,3-cyclic phosphate + ethanolamine. Functionally, dermonecrotic toxins cleave the phosphodiester linkage between the phosphate and headgroup of certain phospholipids (sphingolipid and lysolipid substrates), forming an alcohol (often choline) and a cyclic phosphate. This toxin acts on sphingomyelin (SM). It may also act on ceramide phosphoethanolamine (CPE), lysophosphatidylcholine (LPC) and lysophosphatidylethanolamine (LPE), but not on lysophosphatidylserine (LPS), and lysophosphatidylglycerol (LPG). It acts by transphosphatidylation, releasing exclusively cyclic phosphate products as second products. Induces dermonecrosis, hemolysis, increased vascular permeability, edema, inflammatory response, and platelet aggregation. The sequence is that of Dermonecrotic toxin SpeSicTox-betaIIA1 from Sicarius peruensis (Six-eyed sand spider).